The following is a 307-amino-acid chain: Serine/threonine-protein phosphatase 4 catalytic subunit (307 aa).

Ala2 carries the N-acetylalanine modification. Mn(2+)-binding residues include Asp54, His56, Asp82, and Asn114. His115 functions as the Proton donor in the catalytic mechanism. The Mn(2+) site is built by His164 and His238. Leu307 carries the leucine methyl ester modification.

It belongs to the PPP phosphatase family. PP-4 (PP-X) subfamily. As to quaternary structure, serine/threonine-protein phosphatase 4 (PP4) occurs in different assemblies of the catalytic and one or more regulatory subunits. Component of the PP4 complexes PPP4C-PPP4R1, PPP4C-PPP4R2, PPP4C-PPP4R2-PPP4R3A, PPP4C-PPP4R2-PPP4R3B and PPP4C-PPP4R4. The PPP4C-PPP4R2 complex appears to be a tetramer composed of 2 molecules of PPP4C and 2 molecules of PPP4R2. Interacts with REL, NFKB1/p50 and RELA. Interacts with SMN1 and GEMIN4. Interacts with IRS4 (phosphorylated). Interacts with SMEK1/PPP4R3A; the interaction requires PP4R2. Interacts with HDAC3. Mn(2+) is required as a cofactor. In terms of processing, methylation at the C-terminal Leu-307 is critical for interactions with regulatory subunits and functions in DNA repair.

The protein resides in the cytoplasm. The protein localises to the nucleus. It localises to the cytoskeleton. Its subcellular location is the microtubule organizing center. It is found in the centrosome. It catalyses the reaction O-phospho-L-seryl-[protein] + H2O = L-seryl-[protein] + phosphate. The enzyme catalyses O-phospho-L-threonyl-[protein] + H2O = L-threonyl-[protein] + phosphate. Protein phosphatase that is involved in many processes such as microtubule organization at centrosomes, maturation of spliceosomal snRNPs, apoptosis, DNA repair, tumor necrosis factor (TNF)-alpha signaling, activation of c-Jun N-terminal kinase MAPK8, regulation of histone acetylation, DNA damage checkpoint signaling, NF-kappa-B activation and cell migration. The PPP4C-PPP4R1 PP4 complex may play a role in dephosphorylation and regulation of HDAC3. The PPP4C-PPP4R2-PPP4R3A PP4 complex specifically dephosphorylates H2AX phosphorylated on Ser-140 (gamma-H2AX) generated during DNA replication and required for DNA double strand break repair. Dephosphorylates NDEL1 at CDK1 phosphorylation sites and negatively regulates CDK1 activity in interphase. In response to DNA damage, catalyzes RPA2 dephosphorylation, an essential step for DNA repair since it allows the efficient RPA2-mediated recruitment of RAD51 to chromatin. In Homo sapiens (Human), this protein is Serine/threonine-protein phosphatase 4 catalytic subunit (PPP4C).